Consider the following 199-residue polypeptide: UPF0301 protein Rfer_1377 (199 aa).

The protein belongs to the UPF0301 (AlgH) family.

The sequence is that of UPF0301 protein Rfer_1377 from Albidiferax ferrireducens (strain ATCC BAA-621 / DSM 15236 / T118) (Rhodoferax ferrireducens).